The chain runs to 418 residues: Zinc finger protein 566 (418 aa).

A KRAB domain is found at 6–77 (VMFSDVSVDF…DRELTRGQWP (72 aa)). The C2H2-type 1; degenerate zinc finger occupies 169-193 (KFCASKEYRKTFRHGSQFATHEIIH). 7 C2H2-type zinc fingers span residues 199-221 (YECK…QKIH), 227-249 (FECK…HRIH), 255-277 (YECK…QRIH), 283-305 (YECK…QRIH), 311-333 (YECK…QRIH), 339-361 (YECK…QRIH), and 367-389 (YECK…HRIH). Residues K314 and K328 each participate in a glycyl lysine isopeptide (Lys-Gly) (interchain with G-Cter in SUMO2) cross-link.

This sequence belongs to the krueppel C2H2-type zinc-finger protein family.

Its subcellular location is the nucleus. In terms of biological role, may be involved in transcriptional regulation. This is Zinc finger protein 566 (ZNF566) from Homo sapiens (Human).